The sequence spans 809 residues: Zygotic DNA replication licensing factor mcm3 (809 aa).

An MCM domain is found at 297-504 (IFEQLSRSLA…QDREISDHVL (208 aa)). 347 to 354 (GDPSVAKS) serves as a coordination point for ATP. The Arginine finger motif lies at 479–482 (SRFD). The segment at 664–741 (KKRRRRDEDS…TDSSAKPGLS (78 aa)) is disordered. Over residues 696 to 705 (AQEGESHDPY) the composition is skewed to basic and acidic residues.

It belongs to the MCM family. Component of the mcm2-7 complex (RLF-M). The complex forms a toroidal hexameric ring with the proposed subunit order mcm2-mcm6-mcm4-mcm7-mcm3-mcm5. Component of the CMG helicase complex, composed of the mcm2-7 complex, the GINS complex and cdc45.

It localises to the nucleus. The protein resides in the chromosome. It catalyses the reaction ATP + H2O = ADP + phosphate + H(+). Its function is as follows. Acts as a component of the MCM2-7 complex (MCM complex) which is the putative replicative helicase essential for 'once per cell cycle' DNA replication initiation and elongation in eukaryotic cells. The active ATPase sites in the MCM2-7 ring are formed through the interaction surfaces of two neighboring subunits such that a critical structure of a conserved arginine finger motif is provided in trans relative to the ATP-binding site of the Walker A box of the adjacent subunit. The six ATPase active sites, however, are likely to contribute differentially to the complex helicase activity. The existence of maternal and zygotic forms of mcm3 and mcm6 suggests that specific forms of mcm2-7 complexes may be used during different stages of development. This chain is Zygotic DNA replication licensing factor mcm3 (zmcm3), found in Xenopus tropicalis (Western clawed frog).